An 811-amino-acid polypeptide reads, in one-letter code: MAFLQLFVGLLCGAAVSAFGVDPAVRIGVFQEFSPGQGFSGVTQVKGFRDDTRAFMFQGSSRSVRVPDAAAGHMLQKLRGKTEFSIALTLKQDKLNSGVILSIHHGEHRLLELESSGQKSEVRLHFRTGLQQTHTEIFPFTLADEQWHRVSVSISAAHLTLYVDCNRIYERVVPVPLMEIPEDSSFWVGQRNSAHGLFKGIMQDLQILVMPQGFITQCPDLNRTCPTCNDFHGLVQKIMELQDILAKTSSKLSLAEEKMSGLDSCYCERTCRVKDQIYREEQSWTDGCKNCTCSNGTVRCEKILCPPLDCPDGTTPAYVTGTCCKECQPMCLFSEQTLVEGQSCAVHHPSGLCQLFQCRDRTMHRVPGAEDCPALSCAESDQITLTDRCCRVCRGHDFCAEENICSENSDCVNLDAGASCGCKNGFRPLRLDSAYCEDIDECAEGRHYCRENTECVNTAGSFMCVCHTGFIRIDDYSCTEHDECASGQHDCDENALCFNTVGGHSCSCKPGYSGNGTVCRALCDGRCLNGGSCASPNVCVCVQGFSGQNCETDIDECSEGLVQCAAHATCVNLPGWYHCECRDGYHDNEVFSANGESCRDIDECRTGRSTCANDTVCFNLDGGFDCRCPHGHNCSGDCIHNSRVRHNAQIWVLDTDHCSVCSCQEGQVKCRRMVCDCENPTVDVLCCPECDPRLTSQCLHQNGLLTYSSGDTWIDSCQRCQCLQGEVDCWPLSCPPVDCDFTLVPEGECCPRCVSDPCQAHAVRSDISKTCIDEHGITRFSGSAWVKHGTHCTLCQCKNGHVCCSVDPMCL.

Residues 1–18 (MAFLQLFVGLLCGAAVSA) form the signal peptide. A Laminin G-like domain is found at 54 to 225 (AFMFQGSSRS…TQCPDLNRTC (172 aa)). N-linked (GlcNAc...) asparagine glycosylation is found at N222, N290, and N295. Residues 269–328 (RTCRVKDQIYREEQSWTDGCKNCTCSNGTVRCEKILCPPLDCPDGTTPAYVTGTCCKECQ) enclose the VWFC 1 domain. Residues 395 to 437 (GHDFCAEENICSENSDCVNLDAGASCGCKNGFRPLRLDSAYCE) enclose the EGF-like 1 domain. Cystine bridges form between C399-C411, C405-C420, and C422-C436. The Ca(2+) site is built by D438, I439, and E441. Positions 438–479 (DIDECAEGRHYCRENTECVNTAGSFMCVCHTGFIRIDDYSCT) constitute an EGF-like 2; calcium-binding domain. Disulfide bonds link C442–C455, C449–C464, C466–C478, C484–C497, C491–C506, C508–C519, C523–C533, C527–C539, and C541–C550. Ca(2+) is bound by residues N457, T458, and S461. In terms of domain architecture, EGF-like 3; calcium-binding spans 480-520 (EHDECASGQHDCDENALCFNTVGGHSCSCKPGYSGNGTVCR). The N-linked (GlcNAc...) asparagine glycan is linked to N515. The EGF-like 4 domain occupies 521–551 (ALCDGRCLNGGSCASPNVCVCVQGFSGQNCE). The Ca(2+) site is built by D553, I554, and E556. The region spanning 553–592 (DIDECSEGLVQCAAHATCVNLPGWYHCECRDGYHDNEVFS) is the EGF-like 5; calcium-binding domain. 3 disulfide bridges follow: C557-C570, C564-C579, and C581-C598. N572, L573, and W576 together coordinate Ca(2+). Positions 600, 601, and 603 each coordinate Ca(2+). An EGF-like 6; calcium-binding domain is found at 600 to 635 (DIDECRTGRSTCANDTVCFNLDGGFDCRCPHGHNCS). 3 disulfide bridges follow: C604/C617, C611/C626, and C628/C634. N613 is a glycosylation site (N-linked (GlcNAc...) asparagine). Ca(2+) is bound by residues N619, L620, and G623. N-linked (GlcNAc...) asparagine glycosylation is present at N633. 2 consecutive VWFC domains span residues 636-691 (GDCI…PECD) and 696-754 (SQCL…PRCV).

Homotrimer.

It localises to the secreted. Functionally, may regulate neuronal differentiation, polarization and axon guidance. The sequence is that of Protein kinase C-binding protein NELL2a (nell2a) from Danio rerio (Zebrafish).